The chain runs to 726 residues: Beta-adducin (726 aa).

The tract at residues 1–25 (MSEETVPEAASPPPPQGQPYFDRFS) is disordered. 2 positions are modified to phosphoserine: Ser-11 and Ser-25. Position 55 is a phosphothreonine; by PKA (Thr-55). Phosphoserine occurs at positions 60 and 344. The interval 425–444 (KQQKEKTRWLNTPNTYLRVN) is interaction with calmodulin. The interval 525–726 (AEKSRSPSTE…KSKKKEKVES (202 aa)) is disordered. 2 positions are modified to phosphoserine: Ser-530 and Ser-532. The residue at position 533 (Thr-533) is a Phosphothreonine. The residue at position 535 (Ser-535) is a Phosphoserine. Over residues 566 to 586 (EEYKKEVERKKLELDGEKETA) the composition is skewed to basic and acidic residues. Residues 588–606 (EEPGSPAKSAPASPVQSPA) show a composition bias toward low complexity. Phosphoserine is present on residues Ser-592, Ser-596, Ser-600, and Ser-604. Thr-611 bears the Phosphothreonine mark. 4 positions are modified to phosphoserine: Ser-613, Ser-617, Ser-619, and Ser-621. Over residues 621–631 (SLEEGTKKTET) the composition is skewed to basic and acidic residues. Over residues 632-645 (SKAATTEPETTQPE) the composition is skewed to low complexity. Over residues 665-674 (GLSQMTTSAD) the composition is skewed to polar residues. At Thr-675 the chain carries Phosphothreonine. Phosphoserine is present on residues Ser-686, Ser-689, Ser-693, Ser-697, Ser-699, and Ser-701. A compositionally biased stretch (low complexity) spans 689–701 (SGPMSPEGSPSKS). Over residues 702 to 726 (PSKKKKKFRTPSFLKKSKKKEKVES) the composition is skewed to basic residues. A Phosphoserine; by PKC modification is found at Ser-703. The interaction with calmodulin stretch occupies residues 704 to 721 (KKKKKFRTPSFLKKSKKK). At Ser-713 the chain carries Phosphoserine; by PKA and PKC.

The protein belongs to the aldolase class II family. Adducin subfamily. As to quaternary structure, heterodimer of an alpha and a beta subunit. Found in a complex with ADD2, DMTN and SLC2A1. Interacts with SLC2A1. Post-translationally, the N-terminus is blocked. As to expression, expressed mainly in brain, spleen, kidney cortex and medulla, and heart. Also expressed in human umbilical vein endothelial cells, human vascular smooth muscle cells, kidney tubular cells and K-562 cell line.

It localises to the cytoplasm. The protein localises to the cytoskeleton. The protein resides in the cell membrane. Membrane-cytoskeleton-associated protein that promotes the assembly of the spectrin-actin network. Binds to the erythrocyte membrane receptor SLC2A1/GLUT1 and may therefore provide a link between the spectrin cytoskeleton to the plasma membrane. Binds to calmodulin. Calmodulin binds preferentially to the beta subunit. This Homo sapiens (Human) protein is Beta-adducin (ADD2).